The primary structure comprises 825 residues: NT-3 growth factor receptor (825 aa).

The first 31 residues, 1-31, serve as a signal peptide directing secretion; it reads MDVSLCPAKCSFWRIFLLGSVWLDYVGSVLA. Cystine bridges form between C32/C38 and C36/C45. Over 32-429 the chain is Extracellular; it reads CPANCVCSKT…TVTHKPEEDT (398 aa). Residues N68, N72, and N79 are each glycosylated (N-linked (GlcNAc...) asparagine). LRR repeat units follow at residues 104–125 and 128–149; these read GLQK…AFAK and HLRY…LFQT. N-linked (GlcNAc...) asparagine glycans are attached at residues N133 and N163. The region spanning 160 to 209 is the LRRCT domain; that stretch reads NFFNCSCDIRWMQLWQEQGEAKLNNQNLYCINADGSQLPLFRMNISQCDL. Cystine bridges form between C164-C189 and C166-C207. N203, N218, N232, N259, N267, N272, and N294 each carry an N-linked (GlcNAc...) asparagine glycan. Ig-like C2-type domains follow at residues 210–300 and 309–382; these read PEIS…VALT and SLEE…IAKN. A disulfide bond links C231 and C284. C320 and C362 are joined by a disulfide. N-linked (GlcNAc...) asparagine glycans are attached at residues N375 and N388. A helical transmembrane segment spans residues 430-453; sequence FGVSIAVGLAAFACVLLVVLFIMI. Residues 454–825 lie on the Cytoplasmic side of the membrane; the sequence is NKYGRRSKFG…ATPIYLDILG (372 aa). S493 carries the phosphoserine modification. Phosphotyrosine; by autocatalysis is present on Y516. Positions 538–825 constitute a Protein kinase domain; the sequence is IVLKRELGEG…ATPIYLDILG (288 aa). ATP is bound by residues 544-552 and K572; that span reads LGEGAFGKV. D679 acts as the Proton acceptor in catalysis. 3 positions are modified to phosphotyrosine; by autocatalysis: Y705, Y709, and Y710.

This sequence belongs to the protein kinase superfamily. Tyr protein kinase family. Insulin receptor subfamily. In terms of assembly, exists in a dynamic equilibrium between monomeric (low affinity) and dimeric (high affinity) structures. Binds SH2B2. Interacts with SQSTM1 and KIDINS220. Interacts with PTPRS. Interacts with MAPK8IP3/JIP3. Ligand-mediated auto-phosphorylation.

It localises to the membrane. The enzyme catalyses L-tyrosyl-[protein] + ATP = O-phospho-L-tyrosyl-[protein] + ADP + H(+). Functionally, receptor tyrosine kinase involved in nervous system and probably heart development. Upon binding of its ligand NTF3/neurotrophin-3, NTRK3 autophosphorylates and activates different signaling pathways, including the phosphatidylinositol 3-kinase/AKT and the MAPK pathways, that control cell survival and differentiation. The sequence is that of NT-3 growth factor receptor (NTRK3) from Macaca fascicularis (Crab-eating macaque).